We begin with the raw amino-acid sequence, 437 residues long: MTCRGSPLAPLLLFSLHGVAASLEVSESPGSVQVARGQTAVLPCTFTTSAALINLNVIWMVIPLSNANQPEQVILYQGGQMFDGAPRFHGRVGFTGTMPATNVSIFINNTQLSDTGTYQCLVNNLPDRGGRNIGVTGLTVLVPPSAPHCQIQGSQDIGSDVILLCSSEEGIPRPTYLWEKLDNTLKLPPTATQDQVQGTVTIRNISALSSGLYQCVASNAIGTSTCLLDLQVISPQPRSIGLIAGAIGTGAVIIIFCIALILGAFFYWRSKNKEEEEEEIPNEIREDDLPPKCSSSAKAFHMEISSSENNTLTSSNTYNSRYWSSNPKAHRNTESFGHFGDLRQSFSLHSGNASVPAIYANGSHLAPAPHKTLVVTANRGSSLPAVSRSNGSVSRKARPPPVPSLHTHSYTVSQATLERIGAVPVMVPAQSRAGSLV.

Residues 1–22 (MTCRGSPLAPLLLFSLHGVAAS) form the signal peptide. Residues 23 to 136 (LEVSESPGSV…DRGGRNIGVT (114 aa)) enclose the Ig-like V-type domain. The Extracellular portion of the chain corresponds to 23 to 241 (LEVSESPGSV…VISPQPRSIG (219 aa)). Cystine bridges form between cysteine 44–cysteine 120 and cysteine 165–cysteine 215. Asparagine 102 is a glycosylation site (N-linked (GlcNAc...) asparagine). Residues 144 to 234 (PSAPHCQIQG…TCLLDLQVIS (91 aa)) form the Ig-like C2-type domain. A helical transmembrane segment spans residues 242 to 262 (LIAGAIGTGAVIIIFCIALIL). The Cytoplasmic portion of the chain corresponds to 263 to 437 (GAFFYWRSKN…PAQSRAGSLV (175 aa)). Omega-N-methylarginine is present on arginine 379. The interval 382–405 (SLPAVSRSNGSVSRKARPPPVPSL) is disordered.

In terms of processing, N-glycosylated.

Its subcellular location is the cell membrane. In terms of biological role, functions as a cell adhesion molecule through homophilic interaction. Stimulates cell growth. The polypeptide is Immunoglobulin superfamily member 11 (IGSF11) (Bos taurus (Bovine)).